Here is an 802-residue protein sequence, read N- to C-terminus: Ribosomal protein S6 kinase alpha-5 (802 aa).

Gly residues predominate over residues 1–22; it reads MEEEGGSSGGAAGTSADGGDGG. The disordered stretch occupies residues 1 to 23; it reads MEEEGGSSGGAAGTSADGGDGGE. In terms of domain architecture, Protein kinase 1 spans 49–318; that stretch reads FELLKVLGTG…ADEIKEHLFF (270 aa). ATP-binding positions include 55-63 and K81; that span reads LGTGAYGKV. D177 serves as the catalytic Proton acceptor. S212 is subject to Phosphoserine; by autocatalysis. The 69-residue stretch at 319–387 folds into the AGC-kinase C-terminal domain; it reads QKINWDDLAA…VAPSILFKRN (69 aa). S360 is modified (phosphoserine; by MAPK1, MAPK3 and MAPK14). S376 and S381 each carry phosphoserine; by autocatalysis. The Protein kinase 2 domain maps to 426–687; the sequence is DLKDKPLGEG…MSGLRYNEWL (262 aa). ATP-binding positions include 432–440 and K455; that span reads LGEGSFSIC. D544 functions as the Proton acceptor in the catalytic mechanism. T581 is modified (phosphothreonine; by MAPK1, MAPK3 and MAPK14). Residues S647, S657, S691, and S695 each carry the phosphoserine modification. Phosphothreonine; by MAPK1, MAPK3 and MAPK14 is present on T700. Residues 741–802 are disordered; sequence AKRRKMKKTS…TLFQFSDSVA (62 aa). The span at 749–779 shows a compositional bias: low complexity; that stretch reads TSTSTETRSSSSESSHSSSSHSHGKTTPTKT. S750, S752, and S758 each carry phosphoserine; by autocatalysis. The segment covering 780–802 has biased composition (polar residues); sequence LQPSNPADSNNPETLFQFSDSVA. S798 is subject to Phosphoserine.

The protein belongs to the protein kinase superfamily. AGC Ser/Thr protein kinase family. S6 kinase subfamily. Forms a complex with either MAPK1/ERK2 or MAPK3/ERK1 in quiescent cells which transiently dissociates following mitogenic stimulation. Also associates with MAPK14/p38-alpha. Activated RPS6KA5 associates with and phosphorylates the NF-kappa-B p65 subunit RELA. Interacts with CREBBP and EP300. Mg(2+) is required as a cofactor. Ser-376 and Thr-581 phosphorylation is required for kinase activity. Ser-376 and Ser-212 are autophosphorylated by the C-terminal kinase domain, and their phosphorylation is essential for the catalytic activity of the N-terminal kinase domain. Phosphorylated at Ser-360, Thr-581 and Thr-700 by MAPK1/ERK2, MAPK3/ERK1 and MAPK14/p38-alpha. Autophosphorylated at Ser-750, Ser-752 and Ser-758 by the N-terminal kinase domain. Post-translationally, ubiquitinated. In terms of tissue distribution, widely expressed with high levels in heart, brain and placenta. Less abundant in lung, kidney and liver.

Its subcellular location is the nucleus. The protein resides in the cytoplasm. It catalyses the reaction L-seryl-[protein] + ATP = O-phospho-L-seryl-[protein] + ADP + H(+). It carries out the reaction L-threonyl-[protein] + ATP = O-phospho-L-threonyl-[protein] + ADP + H(+). Its activity is regulated as follows. Activated by phosphorylation at Ser-360, Thr-581 and Thr-700 by MAPK1/ERK2, MAPK3/ERK1 and MAPK14/p38-alpha, and by further autophosphorylation of Ser-212, Ser-376 and Ser-381 by the activated C-terminal kinase domain. The active N-terminal kinase domain finally phosphorylates downstream substrates, as well as Ser-750, Ser-752 and Ser-758 in its own C-terminal region. Functionally, serine/threonine-protein kinase that is required for the mitogen or stress-induced phosphorylation of the transcription factors CREB1 and ATF1 and for the regulation of the transcription factors RELA, STAT3 and ETV1/ER81, and that contributes to gene activation by histone phosphorylation and functions in the regulation of inflammatory genes. Phosphorylates CREB1 and ATF1 in response to mitogenic or stress stimuli such as UV-C irradiation, epidermal growth factor (EGF) and anisomycin. Plays an essential role in the control of RELA transcriptional activity in response to TNF and upon glucocorticoid, associates in the cytoplasm with the glucocorticoid receptor NR3C1 and contributes to RELA inhibition and repression of inflammatory gene expression. In skeletal myoblasts is required for phosphorylation of RELA at 'Ser-276' during oxidative stress. In erythropoietin-stimulated cells, is necessary for the 'Ser-727' phosphorylation of STAT3 and regulation of its transcriptional potential. Phosphorylates ETV1/ER81 at 'Ser-191' and 'Ser-216', and thereby regulates its ability to stimulate transcription, which may be important during development and breast tumor formation. Directly represses transcription via phosphorylation of 'Ser-1' of histone H2A. Phosphorylates 'Ser-10' of histone H3 in response to mitogenics, stress stimuli and EGF, which results in the transcriptional activation of several immediate early genes, including proto-oncogenes c-fos/FOS and c-jun/JUN. May also phosphorylate 'Ser-28' of histone H3. Mediates the mitogen- and stress-induced phosphorylation of high mobility group protein 1 (HMGN1/HMG14). In lipopolysaccharide-stimulated primary macrophages, acts downstream of the Toll-like receptor TLR4 to limit the production of pro-inflammatory cytokines. Functions probably by inducing transcription of the MAP kinase phosphatase DUSP1 and the anti-inflammatory cytokine interleukin 10 (IL10), via CREB1 and ATF1 transcription factors. Plays a role in neuronal cell death by mediating the downstream effects of excitotoxic injury. Phosphorylates TRIM7 at 'Ser-107' in response to growth factor signaling via the MEK/ERK pathway, thereby stimulating its ubiquitin ligase activity. This Homo sapiens (Human) protein is Ribosomal protein S6 kinase alpha-5 (RPS6KA5).